We begin with the raw amino-acid sequence, 261 residues long: Polycomb group RING finger protein 1 (261 aa).

The RING-type zinc-finger motif lies at 45–84 (CYLCAGYFIDATTITECLHTFCKSCIVKYLQTSKYCPMCN).

In terms of assembly, component of a PRC1-like complex.

It is found in the nucleus. Functionally, component of a Polycomb group (PcG) multiprotein PRC1-like complex, a complex class required to maintain the transcriptionally repressive state of many genes, including Hox genes, throughout development. PcG PRC1 complex acts via chromatin remodeling and modification of histones; it mediates monoubiquitination of histone H2A 'Lys-119', rendering chromatin heritably changed in its expressibility. This is Polycomb group RING finger protein 1 (pcgf1) from Danio rerio (Zebrafish).